The following is a 67-amino-acid chain: Andropin (67 aa).

A signal peptide spans 1–19 (MKYFLVLVVLTLILAISVG).

The protein belongs to the andropin family. In terms of tissue distribution, ejaculatory duct of adult males.

The protein localises to the secreted. Functionally, male-specific peptide with moderate activity against Gram-positive bacteria. The polypeptide is Andropin (Anp) (Drosophila orena (Fruit fly)).